Reading from the N-terminus, the 200-residue chain is ATP-dependent Clp protease proteolytic subunit (200 aa).

Ser102 functions as the Nucleophile in the catalytic mechanism. The active site involves His127.

Belongs to the peptidase S14 family. Fourteen ClpP subunits assemble into 2 heptameric rings which stack back to back to give a disk-like structure with a central cavity, resembling the structure of eukaryotic proteasomes.

It localises to the cytoplasm. It catalyses the reaction Hydrolysis of proteins to small peptides in the presence of ATP and magnesium. alpha-casein is the usual test substrate. In the absence of ATP, only oligopeptides shorter than five residues are hydrolyzed (such as succinyl-Leu-Tyr-|-NHMec, and Leu-Tyr-Leu-|-Tyr-Trp, in which cleavage of the -Tyr-|-Leu- and -Tyr-|-Trp bonds also occurs).. In terms of biological role, cleaves peptides in various proteins in a process that requires ATP hydrolysis. Has a chymotrypsin-like activity. Plays a major role in the degradation of misfolded proteins. The protein is ATP-dependent Clp protease proteolytic subunit of Dehalococcoides mccartyi (strain ATCC BAA-2100 / JCM 16839 / KCTC 5957 / BAV1).